The chain runs to 162 residues: uncharacterized protein (162 aa).

An N-terminal signal peptide occupies residues 1 to 21 (MEGIMKKFFALMTLIAGISFS). Residues 32–118 (VIRESKFIAK…KKAELEKMVF (87 aa)) are a coiled coil.

This sequence belongs to the Skp family.

This is an uncharacterized protein from Aquifex aeolicus (strain VF5).